The sequence spans 306 residues: Apolipoprotein E (306 aa).

An N-terminal signal peptide occupies residues 1–18 (MKVLWAVLVVTLLAGCQA). 8 repeat units span residues 81–102 (VLMEDTMKEVKAYKSELEQELG), 103–124 (PMAEDTKARLSKELQAAQARLG), 125–146 (ADMEEVRNRLTQYRSEVQTMLG), 147–168 (QSAEELRARLASHLRKLRKRLL), 169–190 (RDAEDLQKRLAVYKAGAQEGAE), 191–212 (RGVSAIRERLGSLVEQGRLRAA), 213–230 (QTSQPLRERAQAWGERLR), and 231–252 (GRLEEVGGQARDRLDVVREQME). Residues 81–252 (VLMEDTMKEV…RLDVVREQME (172 aa)) form an 8 X 22 AA approximate tandem repeats region. Met-144 is modified (methionine sulfoxide). At Ser-148 the chain carries Phosphoserine. Positions 159–169 (HLRKLRKRLLR) are LDL and other lipoprotein receptors binding. Residue 163–166 (LRKR) participates in heparin binding. The segment at 211–280 (AAQTSQPLRE…GWFEPVVEDM (70 aa)) is lipid-binding and lipoprotein association. Residue 226–233 (GERLRGRL) coordinates heparin. The tract at residues 268-280 (RLKGWFEPVVEDM) is specificity for association with VLDL.

This sequence belongs to the apolipoprotein A1/A4/E family. In terms of assembly, homotetramer. May interact with ABCA1; functionally associated with ABCA1 in the biogenesis of HDLs. May interact with APP/A4 amyloid-beta peptide; the interaction is extremely stable in vitro but its physiological significance is unclear. May interact with MAPT. May interact with MAP2. In the cerebrospinal fluid, interacts with secreted SORL1. Interacts with PMEL; this allows the loading of PMEL luminal fragment on ILVs to induce fibril nucleation. Post-translationally, APOE exists as multiple glycosylated and sialylated glycoforms within cells and in plasma. The extent of glycosylation and sialylation are tissue and context specific. In terms of processing, glycated in plasma VLDL. Phosphorylated by FAM20C in the extracellular medium.

The protein resides in the secreted. It localises to the extracellular space. It is found in the extracellular matrix. The protein localises to the extracellular vesicle. Its subcellular location is the endosome. The protein resides in the multivesicular body. Functionally, APOE is an apolipoprotein, a protein associating with lipid particles, that mainly functions in lipoprotein-mediated lipid transport between organs via the plasma and interstitial fluids. APOE is a core component of plasma lipoproteins and is involved in their production, conversion and clearance. Apolipoproteins are amphipathic molecules that interact both with lipids of the lipoprotein particle core and the aqueous environment of the plasma. As such, APOE associates with chylomicrons, chylomicron remnants, very low density lipoproteins (VLDL) and intermediate density lipoproteins (IDL) but shows a preferential binding to high-density lipoproteins (HDL). It also binds a wide range of cellular receptors including the LDL receptor/LDLR, the LDL receptor-related proteins LRP1, LRP2 and LRP8 and the very low-density lipoprotein receptor/VLDLR that mediate the cellular uptake of the APOE-containing lipoprotein particles. Finally, APOE also has a heparin-binding activity and binds heparan-sulfate proteoglycans on the surface of cells, a property that supports the capture and the receptor-mediated uptake of APOE-containing lipoproteins by cells. A main function of APOE is to mediate lipoprotein clearance through the uptake of chylomicrons, VLDLs, and HDLs by hepatocytes. APOE is also involved in the biosynthesis by the liver of VLDLs as well as their uptake by peripheral tissues ensuring the delivery of triglycerides and energy storage in muscle, heart and adipose tissues. By participating in the lipoprotein-mediated distribution of lipids among tissues, APOE plays a critical role in plasma and tissues lipid homeostasis. APOE is also involved in two steps of reverse cholesterol transport, the HDLs-mediated transport of cholesterol from peripheral tissues to the liver, and thereby plays an important role in cholesterol homeostasis. First, it is functionally associated with ABCA1 in the biogenesis of HDLs in tissues. Second, it is enriched in circulating HDLs and mediates their uptake by hepatocytes. APOE also plays an important role in lipid transport in the central nervous system, regulating neuron survival and sprouting. The protein is Apolipoprotein E (APOE) of Hystrix brachyura (Malayan porcupine).